The sequence spans 419 residues: Pregnancy-specific beta-1-glycoprotein 1 (419 aa).

A signal peptide spans 1–34 (MGTLSAPPCTQRIKWKGLLLTASLLNFWNLPTTA). The region spanning 35–144 (QVTIEAEPTK…TGRFTFTLHL (110 aa)) is the Ig-like V-type domain. 7 N-linked (GlcNAc...) asparagine glycosylation sites follow: Asn61, Asn104, Asn111, Asn199, Asn259, Asn268, and Asn303. 3 consecutive Ig-like C2-type domains span residues 149–234 (PSIS…VTLN), 240–327 (PKPY…VTLN), and 335–410 (PRIY…KSMT). A disulfide bridge links Cys169 with Cys217. 2 disulfide bridges follow: Cys262-Cys310 and Cys354-Cys394.

Belongs to the immunoglobulin superfamily. CEA family.

Its subcellular location is the secreted. This Homo sapiens (Human) protein is Pregnancy-specific beta-1-glycoprotein 1 (PSG1).